The following is a 156-amino-acid chain: Large ribosomal subunit protein uL15 (156 aa).

Residues 25–49 form a disordered region; sequence RGIGCGKGKTSGRGHKGQKARSGTS. Residues 34–43 are compositionally biased toward basic residues; the sequence is TSGRGHKGQK.

The protein belongs to the universal ribosomal protein uL15 family. As to quaternary structure, part of the 50S ribosomal subunit.

Its function is as follows. Binds to the 23S rRNA. The sequence is that of Large ribosomal subunit protein uL15 from Wolbachia sp. subsp. Brugia malayi (strain TRS).